The chain runs to 983 residues: Ephrin type-A receptor 3 (983 aa).

A signal peptide spans 1–20 (MDCQLSILLLLSCSVLDSFG). Topologically, residues 21 to 541 (ELIPQPSNEV…SFSISGESSQ (521 aa)) are extracellular. An Eph LBD domain is found at 29–207 (EVNLLDSKTI…YFKKCPFTVK (179 aa)). N-linked (GlcNAc...) asparagine glycosylation is found at Asn232, Asn337, Asn391, Asn404, and Asn493. Fibronectin type-III domains are found at residues 325-435 (PPSS…TNQA) and 436-531 (APSP…TSPD). The chain crosses the membrane as a helical span at residues 542–565 (VVMIAISAAVAIILLTVVIYVLIG). The Cytoplasmic segment spans residues 566–983 (RFCGYKSKHG…TQSKNGPVPV (418 aa)). Tyr596 and Tyr602 each carry phosphotyrosine; by autocatalysis. Positions 621-882 (ISIDKVVGAG…QIVSILDKLI (262 aa)) constitute a Protein kinase domain. ATP-binding positions include 628–633 (GAGEFG), Lys653, and 700–706 (EYMENGS). At Tyr701 the chain carries Phosphotyrosine; by autocatalysis. The active-site Proton acceptor is the Asp746. 750–751 (RN) is an ATP binding site. Position 779 is a phosphotyrosine; by autocatalysis (Tyr779). In terms of domain architecture, SAM spans 911 to 975 (TTFRTTGDWL…ISSIKALETQ (65 aa)). Tyr937 is subject to Phosphotyrosine. The PDZ-binding motif lies at 981-983 (VPV).

It belongs to the protein kinase superfamily. Tyr protein kinase family. Ephrin receptor subfamily. Heterotetramer upon binding of the ligand. The heterotetramer is composed of an ephrin dimer and a receptor dimer. Oligomerization is probably required to induce biological responses. Forms a ternary EFNA5-EPHA3-ADAM10 complex mediating EFNA5 extracellular domain shedding by ADAM10 which regulates the EFNA5-EPHA3 complex internalization and function. Interacts with NCK1 (via SH2 domain); mediates EFNA5-EPHA3 signaling. Interacts (phosphorylated) with PTPN1; dephosphorylates EPHA3 and may regulate its trafficking and function. Interacts (phosphorylated) with CRK; mediates EFNA5-EPHA3 signaling through RHOA GTPase activation. Post-translationally, autophosphorylates upon activation by EFNA5. Phosphorylation on Tyr-602 mediates interaction with NCK1. Dephosphorylated by PTPN1. As to expression, widely expressed. Highest level in placenta.

The protein localises to the cell membrane. The protein resides in the secreted. The enzyme catalyses L-tyrosyl-[protein] + ATP = O-phospho-L-tyrosyl-[protein] + ADP + H(+). In terms of biological role, receptor tyrosine kinase which binds promiscuously membrane-bound ephrin family ligands residing on adjacent cells, leading to contact-dependent bidirectional signaling into neighboring cells. The signaling pathway downstream of the receptor is referred to as forward signaling while the signaling pathway downstream of the ephrin ligand is referred to as reverse signaling. Highly promiscuous for ephrin-A ligands it binds preferentially EFNA5. Upon activation by EFNA5 regulates cell-cell adhesion, cytoskeletal organization and cell migration. Plays a role in cardiac cells migration and differentiation and regulates the formation of the atrioventricular canal and septum during development probably through activation by EFNA1. Involved in the retinotectal mapping of neurons. May also control the segregation but not the guidance of motor and sensory axons during neuromuscular circuit development. This is Ephrin type-A receptor 3 (EPHA3) from Homo sapiens (Human).